Consider the following 260-residue polypeptide: NAD-capped RNA hydrolase NudC (260 aa).

Position 74 (R74) interacts with substrate. C103, C106, C121, and C124 together coordinate Zn(2+). Residue Y129 coordinates substrate. One can recognise a Nudix hydrolase domain in the interval 130–253; it reads PRIFPCIIVA…TIARALIEQT (124 aa). A divalent metal cation is bound by residues A163, E179, and E183. The short motif at 164–185 is the Nudix box element; that stretch reads GFLEAGETLEDCVAREVHEETG. 197–204 lines the substrate pocket; sequence QPWAFPSS. A divalent metal cation is bound at residue E224. A246 provides a ligand contact to substrate.

This sequence belongs to the Nudix hydrolase family. NudC subfamily. In terms of assembly, homodimer. It depends on Mg(2+) as a cofactor. Mn(2+) serves as cofactor. The cofactor is Zn(2+).

It carries out the reaction a 5'-end NAD(+)-phospho-ribonucleoside in mRNA + H2O = a 5'-end phospho-adenosine-phospho-ribonucleoside in mRNA + beta-nicotinamide D-ribonucleotide + 2 H(+). It catalyses the reaction NAD(+) + H2O = beta-nicotinamide D-ribonucleotide + AMP + 2 H(+). The enzyme catalyses NADH + H2O = reduced beta-nicotinamide D-ribonucleotide + AMP + 2 H(+). MRNA decapping enzyme that specifically removes the nicotinamide adenine dinucleotide (NAD) cap from a subset of mRNAs by hydrolyzing the diphosphate linkage to produce nicotinamide mononucleotide (NMN) and 5' monophosphate mRNA. The NAD-cap is present at the 5'-end of some mRNAs and stabilizes RNA against 5'-processing. Has preference for mRNAs with a 5'-end purine. Catalyzes the hydrolysis of a broad range of dinucleotide pyrophosphates. The protein is NAD-capped RNA hydrolase NudC of Vibrio parahaemolyticus serotype O3:K6 (strain RIMD 2210633).